Here is a 289-residue protein sequence, read N- to C-terminus: 1D-myo-inositol 2-acetamido-2-deoxy-alpha-D-glucopyranoside deacetylase 1 (289 aa).

Residues His4, Asp7, and His140 each contribute to the Zn(2+) site.

Belongs to the MshB deacetylase family. Requires Zn(2+) as cofactor.

The catalysed reaction is 1D-myo-inositol 2-acetamido-2-deoxy-alpha-D-glucopyranoside + H2O = 1D-myo-inositol 2-amino-2-deoxy-alpha-D-glucopyranoside + acetate. Catalyzes the deacetylation of 1D-myo-inositol 2-acetamido-2-deoxy-alpha-D-glucopyranoside (GlcNAc-Ins) in the mycothiol biosynthesis pathway. The chain is 1D-myo-inositol 2-acetamido-2-deoxy-alpha-D-glucopyranoside deacetylase 1 from Frankia alni (strain DSM 45986 / CECT 9034 / ACN14a).